The primary structure comprises 573 residues: Proton-coupled zinc antiporter SLC30A9, mitochondrial (573 aa).

The tract at residues 66 to 108 (NCSTSGSGKDGSPTRPEEPKTTEKAQAAQPAAKGAGSKPQGLT) is disordered. Residues 90 to 104 (AQAAQPAAKGAGSKP) show a composition bias toward low complexity. The next 5 helical transmembrane spans lie at 244–264 (VVMV…LAWV), 319–339 (GVGI…MGLL), 347–367 (LLWA…TLLV), 397–417 (VVLL…GCMG), and 429–449 (SLGS…LIYT). The LXXLL motif motif lies at 467 to 471 (LTEFL).

This sequence belongs to the cation diffusion facilitator (CDF) transporter (TC 2.A.4) family. SLC30A subfamily.

The protein localises to the mitochondrion membrane. Its subcellular location is the nucleus. It is found in the endoplasmic reticulum. The catalysed reaction is Zn(2+)(in) + 2 H(+)(out) = Zn(2+)(out) + 2 H(+)(in). Mitochondrial proton-coupled zinc ion antiporter mediating the export of zinc from the mitochondria and involved in zinc homeostasis, zinc mobilization as well as mitochondrial morphology and health. In nucleus, may function as a secondary coactivator for nuclear receptors. The protein is Proton-coupled zinc antiporter SLC30A9, mitochondrial (slc30a9) of Danio rerio (Zebrafish).